Consider the following 502-residue polypeptide: MVGQRVRTRFAPSPTGYLHVGGLRTALYNYLFAKKMHGDFIIRIEDTDQTRKVEGAQQNLIKALEWAGIVADESPEKGGNYGPYVQSERLDLYGRYCQQLLDDQHAYYCFATHEELEENRQLQIKQGLQPKYNRKWLPEEMGGSMPPSVIRKKLDEGGPYVIRMKVPDYVSVWFEDIIRGPVEFDSATIDDQVLMKSDGFPTYHFASVIDDHLMEFTHIIRGEEWLSSMPKHLLLYEFFGWEPPKVAHLPLLLNADRSKLSKRQGDVAVEDYIRKGYSNDAIINFVAMLGWNEGEGSEQEVYSMEQLIEKFSLERVGKAGAVFNIDKLNWLEKQYIKNRPTEQLVPVIKPILLAELERKETMMPVDLITSEAYLEKVIELMRERVGFEHEFVTFSSYFFFEPDSYDEEAVKKRWAPDTNSLLQEFTEILATLEEFSAENIEAHLKEFVAPKGLKAAALIHPLRIVSSGVSFGPSLYHMLEVLGKETVLRRILKGREKITFSA.

The 'HIGH' region motif lies at Pro-12–Gly-22. A 'KMSKS' region motif is present at residues Lys-259 to Arg-263. Lys-262 is a binding site for ATP.

Belongs to the class-I aminoacyl-tRNA synthetase family. Glutamate--tRNA ligase type 1 subfamily. As to quaternary structure, monomer.

It is found in the cytoplasm. The enzyme catalyses tRNA(Glu) + L-glutamate + ATP = L-glutamyl-tRNA(Glu) + AMP + diphosphate. Functionally, catalyzes the attachment of glutamate to tRNA(Glu) in a two-step reaction: glutamate is first activated by ATP to form Glu-AMP and then transferred to the acceptor end of tRNA(Glu). In Pelodictyon phaeoclathratiforme (strain DSM 5477 / BU-1), this protein is Glutamate--tRNA ligase.